A 114-amino-acid chain; its full sequence is T cell receptor beta variable 5-6 (114 aa).

The signal sequence occupies residues 1–21 (MGPGLLCWALLCLLGAGLVDA). In terms of domain architecture, Ig-like spans 22–114 (GVTQSPTHLI…SALYLCASSL (93 aa)). C42 and C110 are joined by a disulfide. A glycan (N-linked (GlcNAc...) asparagine) is linked at N90.

In terms of assembly, alpha-beta TR is a heterodimer composed of an alpha and beta chain; disulfide-linked. The alpha-beta TR is associated with the transmembrane signaling CD3 coreceptor proteins to form the TR-CD3 (TcR or TCR). The assembly of alpha-beta TR heterodimers with CD3 occurs in the endoplasmic reticulum where a single alpha-beta TR heterodimer associates with one CD3D-CD3E heterodimer, one CD3G-CD3E heterodimer and one CD247 homodimer forming a stable octameric structure. CD3D-CD3E and CD3G-CD3E heterodimers preferentially associate with TR alpha and TR beta chains, respectively. The association of the CD247 homodimer is the last step of TcR assembly in the endoplasmic reticulum and is required for transport to the cell surface.

It is found in the cell membrane. V region of the variable domain of T cell receptor (TR) beta chain that participates in the antigen recognition. Alpha-beta T cell receptors are antigen specific receptors which are essential to the immune response and are present on the cell surface of T lymphocytes. Recognize peptide-major histocompatibility (MH) (pMH) complexes that are displayed by antigen presenting cells (APC), a prerequisite for efficient T cell adaptive immunity against pathogens. Binding of alpha-beta TR to pMH complex initiates TR-CD3 clustering on the cell surface and intracellular activation of LCK that phosphorylates the ITAM motifs of CD3G, CD3D, CD3E and CD247 enabling the recruitment of ZAP70. In turn ZAP70 phosphorylates LAT, which recruits numerous signaling molecules to form the LAT signalosome. The LAT signalosome propagates signal branching to three major signaling pathways, the calcium, the mitogen-activated protein kinase (MAPK) kinase and the nuclear factor NF-kappa-B (NF-kB) pathways, leading to the mobilization of transcription factors that are critical for gene expression and essential for T cell growth and differentiation. The T cell repertoire is generated in the thymus, by V-(D)-J rearrangement. This repertoire is then shaped by intrathymic selection events to generate a peripheral T cell pool of self-MH restricted, non-autoaggressive T cells. Post-thymic interaction of alpha-beta TR with the pMH complexes shapes TR structural and functional avidity. The chain is T cell receptor beta variable 5-6 from Homo sapiens (Human).